The following is a 128-amino-acid chain: Ribonuclease P protein component (128 aa).

Belongs to the RnpA family. In terms of assembly, consists of a catalytic RNA component (M1 or rnpB) and a protein subunit.

It carries out the reaction Endonucleolytic cleavage of RNA, removing 5'-extranucleotides from tRNA precursor.. Its function is as follows. RNaseP catalyzes the removal of the 5'-leader sequence from pre-tRNA to produce the mature 5'-terminus. It can also cleave other RNA substrates such as 4.5S RNA. The protein component plays an auxiliary but essential role in vivo by binding to the 5'-leader sequence and broadening the substrate specificity of the ribozyme. This is Ribonuclease P protein component from Mycoplasma genitalium (strain ATCC 33530 / DSM 19775 / NCTC 10195 / G37) (Mycoplasmoides genitalium).